We begin with the raw amino-acid sequence, 148 residues long: Antitoxin Xre (148 aa).

Belongs to the MbcA/ParS/Xre antitoxin family. As to quaternary structure, homodimer. Forms a complex with cognate toxin Rse.

In terms of biological role, antitoxin component of a type II toxin-antitoxin (TA) system. Neutralizes the NAD(+) depleting activity of cognate toxin Res. The sequence is that of Antitoxin Xre from Photorhabdus laumondii subsp. laumondii (strain DSM 15139 / CIP 105565 / TT01) (Photorhabdus luminescens subsp. laumondii).